A 279-amino-acid polypeptide reads, in one-letter code: Tryptophan prenyltransferase ComQ (279 aa).

The Mg(2+) site is built by D67 and D71.

It belongs to the FPP/GGPP synthase family. It depends on Mg(2+) as a cofactor.

It localises to the cell membrane. The catalysed reaction is L-tryptophyl-[protein] + (2E)-geranyl diphosphate = (2S,3R)-3-geranyl-2,3-dihydro-2,N(alpha)-cyclo-L-tryptophyl-[protein] + diphosphate. Functionally, part of a major quorum-sensing system that regulates the development of genetic competence. Involved in the maturation of the competence pheromone ComX. Acts by catalyzing the transfer of a geranyl group on the ComX pheromone. Cannot use farnesyl diphosphate (FPP). This is Tryptophan prenyltransferase ComQ from Bacillus spizizenii (Bacillus subtilis subsp. spizizenii).